Consider the following 372-residue polypeptide: NAD(P)H-quinone oxidoreductase subunit 1 (372 aa).

A run of 8 helical transmembrane segments spans residues 27–47 (LLWL…GVLV), 97–117 (LLFT…WLII), 128–148 (VGIG…GLLM), 176–196 (LALA…IDIV), 204–224 (FLSW…ICAL), 270–290 (LLVS…ELIA), 308–328 (SLGI…AILL), and 351–371 (ISLV…FAFG).

This sequence belongs to the complex I subunit 1 family. As to quaternary structure, NDH-1 is composed of at least 11 different subunits.

Its subcellular location is the cellular thylakoid membrane. It carries out the reaction a plastoquinone + NADH + (n+1) H(+)(in) = a plastoquinol + NAD(+) + n H(+)(out). It catalyses the reaction a plastoquinone + NADPH + (n+1) H(+)(in) = a plastoquinol + NADP(+) + n H(+)(out). NDH-1 shuttles electrons from an unknown electron donor, via FMN and iron-sulfur (Fe-S) centers, to quinones in the respiratory and/or the photosynthetic chain. The immediate electron acceptor for the enzyme in this species is believed to be plastoquinone. Couples the redox reaction to proton translocation, and thus conserves the redox energy in a proton gradient. The chain is NAD(P)H-quinone oxidoreductase subunit 1 from Prochlorococcus marinus (strain SARG / CCMP1375 / SS120).